A 186-amino-acid chain; its full sequence is Ribosome-recycling factor (186 aa).

This sequence belongs to the RRF family.

It is found in the cytoplasm. Functionally, responsible for the release of ribosomes from messenger RNA at the termination of protein biosynthesis. May increase the efficiency of translation by recycling ribosomes from one round of translation to another. The protein is Ribosome-recycling factor of Burkholderia mallei (strain NCTC 10247).